The sequence spans 126 residues: Fatty acid-binding protein 10-A, liver basic (126 aa).

K57, K77, H99, and Q101 together coordinate cholate.

Belongs to the calycin superfamily. Fatty-acid binding protein (FABP) family. Expressed in the developing embryonic liver from 48 hpf. Also expressed in the liver of 5-day-old larvae. In adults, primarily expressed in the liver, with weak expression in the testis and intestine.

Its subcellular location is the cytoplasm. Functionally, binds hydrophobic ligands, such as cholate, in the cytoplasm. May be involved in intracellular lipid transport. Binds one cholate per subunit. This is Fatty acid-binding protein 10-A, liver basic (fabp10a) from Danio rerio (Zebrafish).